Here is a 525-residue protein sequence, read N- to C-terminus: Bifunctional purine biosynthesis protein PurH (525 aa).

In terms of domain architecture, MGS-like spans 1 to 148 (MPSNNLIKNA…KNYKNVIVIV (148 aa)).

It belongs to the PurH family.

The enzyme catalyses (6R)-10-formyltetrahydrofolate + 5-amino-1-(5-phospho-beta-D-ribosyl)imidazole-4-carboxamide = 5-formamido-1-(5-phospho-D-ribosyl)imidazole-4-carboxamide + (6S)-5,6,7,8-tetrahydrofolate. It carries out the reaction IMP + H2O = 5-formamido-1-(5-phospho-D-ribosyl)imidazole-4-carboxamide. The protein operates within purine metabolism; IMP biosynthesis via de novo pathway; 5-formamido-1-(5-phospho-D-ribosyl)imidazole-4-carboxamide from 5-amino-1-(5-phospho-D-ribosyl)imidazole-4-carboxamide (10-formyl THF route): step 1/1. It functions in the pathway purine metabolism; IMP biosynthesis via de novo pathway; IMP from 5-formamido-1-(5-phospho-D-ribosyl)imidazole-4-carboxamide: step 1/1. In Buchnera aphidicola subsp. Acyrthosiphon pisum (strain 5A), this protein is Bifunctional purine biosynthesis protein PurH.